The chain runs to 200 residues: dTTP/UTP pyrophosphatase (200 aa).

D81 (proton acceptor) is an active-site residue.

Belongs to the Maf family. YhdE subfamily. A divalent metal cation serves as cofactor.

The protein localises to the cytoplasm. It catalyses the reaction dTTP + H2O = dTMP + diphosphate + H(+). The catalysed reaction is UTP + H2O = UMP + diphosphate + H(+). Its function is as follows. Nucleoside triphosphate pyrophosphatase that hydrolyzes dTTP and UTP. May have a dual role in cell division arrest and in preventing the incorporation of modified nucleotides into cellular nucleic acids. The polypeptide is dTTP/UTP pyrophosphatase (Albidiferax ferrireducens (strain ATCC BAA-621 / DSM 15236 / T118) (Rhodoferax ferrireducens)).